The chain runs to 356 residues: Mannonate dehydratase (356 aa).

Belongs to the mannonate dehydratase family. Requires Fe(2+) as cofactor. It depends on Mn(2+) as a cofactor.

It carries out the reaction D-mannonate = 2-dehydro-3-deoxy-D-gluconate + H2O. It participates in carbohydrate metabolism; pentose and glucuronate interconversion. Functionally, catalyzes the dehydration of D-mannonate. The polypeptide is Mannonate dehydratase (Levilactobacillus brevis (strain ATCC 367 / BCRC 12310 / CIP 105137 / JCM 1170 / LMG 11437 / NCIMB 947 / NCTC 947) (Lactobacillus brevis)).